A 279-amino-acid chain; its full sequence is MDDQRDLISNHEQLPILGNRPREPERCSRGALYTGVSVLVALLLAGQATTAYFLYQQQGRLDKLTITSQNLQLESLRMKLPKSAKPVSQMRMATPLLMRPMSMDNMLLGPVKNVTKYGNMTQDHVMHLLTRSGPLEYPQLKGTFPENLKHLKNSMDGVNWKIFESWMKQWLLFEMSKNSLEEKKPTEAPPKVLTKCQEEVSHIPAVYPGAFRPKCDENGNYLPLQCHGSTGYCWCVFPNGTEVPHTKSRGRHNCSEPLDMEDLSSGLGVTRQELGQVTL.

The interval 1–23 (MDDQRDLISNHEQLPILGNRPRE) is disordered. Over 1-29 (MDDQRDLISNHEQLPILGNRPREPERCSR) the chain is Cytoplasmic. At S9 the chain carries Phosphoserine. Residues 30 to 55 (GALYTGVSVLVALLLAGQATTAYFLY) traverse the membrane as a helical; Signal-anchor for type II membrane protein segment. Residues 56 to 279 (QQQGRLDKLT…TRQELGQVTL (224 aa)) are Extracellular-facing. N-linked (GlcNAc...) asparagine glycans are attached at residues N113 and N119. One can recognise a Thyroglobulin type-1 domain in the interval 193-254 (LTKCQEEVSH…HTKSRGRHNC (62 aa)). Disulfide bonds link C196-C215, C226-C233, and C235-C254. O-linked (Xyl...) (chondroitin sulfate) serine glycosylation occurs at S265.

Nonamer composed of three alpha/beta/gamma heterotrimers. Interacts with CD44; this complex is essential for the MIF-induced signaling cascade that results in B cell survival. In terms of assembly, interacts with the mature form of CTSL; the complex survive in neutral pH environment. Expressed in thymus and lymph noodes. Expressed by antigen-presenting cells (APCs). As to expression, expressed in thymus and lymph noodes.

The protein resides in the late endosome. Its subcellular location is the lysosome. It is found in the cell membrane. The protein localises to the endoplasmic reticulum membrane. It localises to the golgi apparatus. The protein resides in the trans-Golgi network. Its subcellular location is the endosome. It is found in the secreted. Plays a critical role in MHC class II antigen processing by stabilizing peptide-free class II alpha/beta heterodimers in a complex soon after their synthesis and directing transport of the complex from the endoplasmic reticulum to compartments where peptide loading of class II takes place. Enhance also the stimulation of T-cell responses through interaction with CD44. In terms of biological role, stabilizes the conformation of mature CTSL by binding to its active site and serving as a chaperone to help maintain a pool of mature enzyme in endocytic compartments and extracellular space of antigen-presenting cells (APCs). Its function is as follows. Binds to the peptide-binding site of MHC class II alpha/beta heterodimers forming an alpha-beta-CLIP complex, thereby preventing the loading of antigenic peptides to the MHC class II complex until its release by HLA-DM in the endosome. In Mus musculus (Mouse), this protein is H-2 class II histocompatibility antigen gamma chain.